The chain runs to 1221 residues: DNA-directed RNA polymerase subunit beta' (1221 aa).

Zn(2+)-binding residues include cysteine 60, cysteine 62, cysteine 75, and cysteine 78. 3 residues coordinate Mg(2+): aspartate 449, aspartate 451, and aspartate 453. The Zn(2+) site is built by cysteine 821, cysteine 896, cysteine 903, and cysteine 906.

Belongs to the RNA polymerase beta' chain family. As to quaternary structure, the RNAP catalytic core consists of 2 alpha, 1 beta, 1 beta' and 1 omega subunit. When a sigma factor is associated with the core the holoenzyme is formed, which can initiate transcription. The cofactor is Mg(2+). Zn(2+) is required as a cofactor.

It carries out the reaction RNA(n) + a ribonucleoside 5'-triphosphate = RNA(n+1) + diphosphate. DNA-dependent RNA polymerase catalyzes the transcription of DNA into RNA using the four ribonucleoside triphosphates as substrates. In Lactobacillus delbrueckii subsp. bulgaricus (strain ATCC 11842 / DSM 20081 / BCRC 10696 / JCM 1002 / NBRC 13953 / NCIMB 11778 / NCTC 12712 / WDCM 00102 / Lb 14), this protein is DNA-directed RNA polymerase subunit beta'.